Consider the following 306-residue polypeptide: MDRKSSGGCSIMFKSGFIGIIGRPNVGKSTLLNGILGEKLAIITHKPQTTRNRIMGIRNADNAQFIFVDTPGIHSASTPLNRLMVRTATETFTDSDILLLVVEAGQAVHPEDLPIIESLKESGTISFLILNKIDLIRKEQLLPLMDAYRNLHSFAELIPISALTGEGIPLLLDELWKYLPEGPQYFPDDMMTDQSERFLAAEIIREKILLLTHKEIPYSSAVVVDAFKEDEARNLIRISATINVEKESQKGIIIGKKGTMLKEIGTRARVDMEKFFATRIFLELFVRVRKDWTKDPRMLREFGYNE.

The Era-type G domain occupies 14–181; sequence KSGFIGIIGR…LDELWKYLPE (168 aa). The interval 22-29 is G1; sequence GRPNVGKS. 22–29 contributes to the GTP binding site; the sequence is GRPNVGKS. The tract at residues 48-52 is G2; the sequence is QTTRN. The G3 stretch occupies residues 69 to 72; sequence DTPG. GTP is bound by residues 69–73 and 131–134; these read DTPGI and NKID. Residues 131–134 are G4; the sequence is NKID. The segment at 160-162 is G5; that stretch reads ISA. In terms of domain architecture, KH type-2 spans 212 to 290; the sequence is THKEIPYSSA…FLELFVRVRK (79 aa).

The protein belongs to the TRAFAC class TrmE-Era-EngA-EngB-Septin-like GTPase superfamily. Era GTPase family. In terms of assembly, monomer.

It is found in the cytoplasm. Its subcellular location is the cell inner membrane. Its function is as follows. An essential GTPase that binds both GDP and GTP, with rapid nucleotide exchange. Plays a role in 16S rRNA processing and 30S ribosomal subunit biogenesis and possibly also in cell cycle regulation and energy metabolism. This is GTPase Era from Syntrophus aciditrophicus (strain SB).